A 129-amino-acid chain; its full sequence is Holo-[acyl-carrier-protein] synthase (129 aa).

Mg(2+)-binding residues include Asp-8 and Glu-58.

The protein belongs to the P-Pant transferase superfamily. AcpS family. Requires Mg(2+) as cofactor.

The protein resides in the cytoplasm. It carries out the reaction apo-[ACP] + CoA = holo-[ACP] + adenosine 3',5'-bisphosphate + H(+). Transfers the 4'-phosphopantetheine moiety from coenzyme A to a Ser of acyl-carrier-protein. In Acidithiobacillus ferrooxidans (strain ATCC 53993 / BNL-5-31) (Leptospirillum ferrooxidans (ATCC 53993)), this protein is Holo-[acyl-carrier-protein] synthase.